The sequence spans 964 residues: Coatomer subunit beta (964 aa).

HEAT repeat units follow at residues 129–166, 238–275, 314–351, 393–430, and 466–506; these read ELLEPLMPAIRACLDHRHSYVRRNAVLAIFTIYKNFDW, AERSRFIRCIYNLLNSSSNAVRYESAGTLITLSLAPTA, KVMQDLVMDVLRVLAAPDIEVRRKTLALALDLVYSRNI, DVAANVIPVLVEFLSDTNELAAADVLIFIREAIQKFPA, and SQIL…QQGS. Positions 490–501 are enriched in basic and acidic residues; the sequence is RRLAGDQTEEQK. The interval 490-530 is disordered; the sequence is RRLAGDQTEEQKQQQGSAGGNAAGSAAEGSGSGNASNKVTS. Residues 512-526 show a composition bias toward low complexity; sequence AGSAAEGSGSGNASN.

Oligomeric complex that consists of at least the alpha, beta, beta', gamma, delta, epsilon and zeta subunits. During oogenesis and spermatogenesis, expressed in ovariole, germarium, testis tip and testis.

The protein resides in the cytoplasm. Its subcellular location is the golgi apparatus membrane. It is found in the cytoplasmic vesicle. It localises to the COPI-coated vesicle membrane. In terms of biological role, the coatomer is a cytosolic protein complex that binds to dilysine motifs and reversibly associates with Golgi non-clathrin-coated vesicles, which further mediate biosynthetic protein transport from the ER, via the Golgi up to the trans Golgi network. Coatomer complex is required for budding from Golgi membranes, and is essential for the retrograde Golgi-to-ER transport of dilysine-tagged proteins. Required for limiting lipid storage in lipid droplets. The sequence is that of Coatomer subunit beta from Drosophila melanogaster (Fruit fly).